Reading from the N-terminus, the 283-residue chain is Bifunctional protein FolD (283 aa).

NADP(+) contacts are provided by residues Gly165–Ser167 and Ser190.

Belongs to the tetrahydrofolate dehydrogenase/cyclohydrolase family. As to quaternary structure, homodimer.

It carries out the reaction (6R)-5,10-methylene-5,6,7,8-tetrahydrofolate + NADP(+) = (6R)-5,10-methenyltetrahydrofolate + NADPH. The catalysed reaction is (6R)-5,10-methenyltetrahydrofolate + H2O = (6R)-10-formyltetrahydrofolate + H(+). It participates in one-carbon metabolism; tetrahydrofolate interconversion. In terms of biological role, catalyzes the oxidation of 5,10-methylenetetrahydrofolate to 5,10-methenyltetrahydrofolate and then the hydrolysis of 5,10-methenyltetrahydrofolate to 10-formyltetrahydrofolate. This Paracidovorax citrulli (strain AAC00-1) (Acidovorax citrulli) protein is Bifunctional protein FolD.